Here is a 591-residue protein sequence, read N- to C-terminus: Oxaloacetate decarboxylase alpha chain (591 aa).

One can recognise a Pyruvate carboxyltransferase domain in the interval 3–263 (IAITDVVLRD…DTGLDILKLE (261 aa)). Residues 518-591 (PAGAGTPVTA…SVGDTLMTLA (74 aa)) enclose the Biotinyl-binding domain. Lys557 bears the N6-biotinyllysine mark.

Composed of three chains (alpha, beta, and gamma). Biotin is required as a cofactor.

The enzyme catalyses oxaloacetate + 2 Na(+)(in) + H(+) = pyruvate + 2 Na(+)(out) + CO2. Functionally, catalyzes the decarboxylation of oxaloacetate coupled to Na(+) translocation. The protein is Oxaloacetate decarboxylase alpha chain (oadA1) of Salmonella typhimurium (strain LT2 / SGSC1412 / ATCC 700720).